The sequence spans 93 residues: Acylphosphatase (93 aa).

One can recognise an Acylphosphatase-like domain in the interval 6–93; it reads RLVAWVRGQV…RGGYEGFAIR (88 aa). Catalysis depends on residues arginine 21 and asparagine 40.

This sequence belongs to the acylphosphatase family.

The enzyme catalyses an acyl phosphate + H2O = a carboxylate + phosphate + H(+). The polypeptide is Acylphosphatase (acyP) (Streptomyces coelicolor (strain ATCC BAA-471 / A3(2) / M145)).